The chain runs to 451 residues: tRNA-2-methylthio-N(6)-dimethylallyladenosine synthase (451 aa).

Residues 1-116 (MTYFFETYGC…LPQIFDEIKA (116 aa)) enclose the MTTase N-terminal domain. Positions 10, 46, 79, 162, 166, and 169 each coordinate [4Fe-4S] cluster. Positions 148-384 (SPKSFQSYVP…IDLQLKITAK (237 aa)) constitute a Radical SAM core domain. In terms of domain architecture, TRAM spans 387 to 451 (KAKLGKKVDI…KGKTFRANLN (65 aa)).

Belongs to the methylthiotransferase family. MiaB subfamily. In terms of assembly, monomer. [4Fe-4S] cluster serves as cofactor.

The protein resides in the cytoplasm. The catalysed reaction is N(6)-dimethylallyladenosine(37) in tRNA + (sulfur carrier)-SH + AH2 + 2 S-adenosyl-L-methionine = 2-methylsulfanyl-N(6)-dimethylallyladenosine(37) in tRNA + (sulfur carrier)-H + 5'-deoxyadenosine + L-methionine + A + S-adenosyl-L-homocysteine + 2 H(+). In terms of biological role, catalyzes the methylthiolation of N6-(dimethylallyl)adenosine (i(6)A), leading to the formation of 2-methylthio-N6-(dimethylallyl)adenosine (ms(2)i(6)A) at position 37 in tRNAs that read codons beginning with uridine. The sequence is that of tRNA-2-methylthio-N(6)-dimethylallyladenosine synthase from Treponema denticola (strain ATCC 35405 / DSM 14222 / CIP 103919 / JCM 8153 / KCTC 15104).